The sequence spans 540 residues: Upstream-binding protein 1 (540 aa).

Serine 22 bears the Phosphoserine mark. The Grh/CP2 DB domain maps to 60 to 296; that stretch reads EHPPFQYVMC…EQKKSSKRTL (237 aa). 2 disordered regions span residues 236–270 and 285–368; these read KPKG…DTTI and EHEQ…QPSA. The span at 238–262 shows a compositional bias: basic and acidic residues; the sequence is KGADRKQKTDREKMEKRTAHEKEKY. A compositionally biased stretch (polar residues) spans 320-368; it reads YVNNSPSPAPTFTSPQQSTCSVPDSNSSSPNHQGDGASQTSGEQIQPSA. Serine 390 and serine 393 each carry phosphoserine.

Belongs to the grh/CP2 family. CP2 subfamily. As to quaternary structure, interacts with TFCP2. Interacts with PIAS1, and is probably part of a complex containing TFCP2, UBP1 and PIAS1. In terms of tissue distribution, expressed in adrenal tissue, JEG-3, NCI-H295A, Hep-G2 and HeLa cell lines.

It is found in the nucleus. Functions as a transcriptional activator in a promoter context-dependent manner. Modulates the placental expression of CYP11A1. Involved in regulation of the alpha-globin gene in erythroid cells. Activation of the alpha-globin promoter in erythroid cells is via synergistic interaction with TFCP2. Involved in regulation of the alpha-globin gene in erythroid cells. Binds strongly to sequences around the HIV-1 initiation site and weakly over the TATA-box. Represses HIV-1 transcription by inhibiting the binding of TFIID to the TATA-box. This Homo sapiens (Human) protein is Upstream-binding protein 1 (UBP1).